The following is a 446-amino-acid chain: C4-dicarboxylate transport protein 2 (446 aa).

The next 10 helical transmembrane spans lie at 7–26, 46–64, 77–99, 152–171, 192–211, 221–243, 291–313, 318–340, 353–375, and 381–403; these read PLFGQVLIALALGIALGIWA, MLIAPIVFSVVVVGICGAG, VIYFEVVTTIALALGIALAYAFG, ILQVLLVSILFGCALSLLGE, AVVIRLAPLGVLGAVAFTVG, LGFLVLLFYAAVAVFVVVVLGGI, VVGLVIPTGYSFNLDAFSIYLTL, IAQATNTPLALSDLLLILGVALI, IVILAATLSVIPAIPAIGLVLVL, and IGIARALGNLLGNCVATVVIAAW.

The protein belongs to the dicarboxylate/amino acid:cation symporter (DAACS) (TC 2.A.23) family.

The protein resides in the cell inner membrane. Functionally, responsible for the transport of dicarboxylates such as succinate, fumarate, and malate from the periplasm across the membrane. This Ralstonia nicotianae (strain ATCC BAA-1114 / GMI1000) (Ralstonia solanacearum) protein is C4-dicarboxylate transport protein 2 (dctA2).